Here is a 459-residue protein sequence, read N- to C-terminus: uncharacterized protein (459 aa).

The segment at 28–47 (AHDEELTGPPQKPAYAAKPA) is disordered. An FAD-binding PCMH-type domain is found at 35–214 (GPPQKPAYAA…TEVIVKLHPR (180 aa)).

Belongs to the oxygen-dependent FAD-linked oxidoreductase family. FAD is required as a cofactor.

This is an uncharacterized protein from Mycobacterium tuberculosis (strain CDC 1551 / Oshkosh).